The sequence spans 558 residues: Oxygen-dependent choline dehydrogenase (558 aa).

8–37 (DYIIIGAGSAGNVLATRLTEDSDVSVLLLE) serves as a coordination point for FAD. Catalysis depends on His-475, which acts as the Proton acceptor.

This sequence belongs to the GMC oxidoreductase family. FAD serves as cofactor.

It carries out the reaction choline + A = betaine aldehyde + AH2. The enzyme catalyses betaine aldehyde + NAD(+) + H2O = glycine betaine + NADH + 2 H(+). Its pathway is amine and polyamine biosynthesis; betaine biosynthesis via choline pathway; betaine aldehyde from choline (cytochrome c reductase route): step 1/1. Its function is as follows. Involved in the biosynthesis of the osmoprotectant glycine betaine. Catalyzes the oxidation of choline to betaine aldehyde and betaine aldehyde to glycine betaine at the same rate. The polypeptide is Oxygen-dependent choline dehydrogenase (Chromohalobacter salexigens (strain ATCC BAA-138 / DSM 3043 / CIP 106854 / NCIMB 13768 / 1H11)).